The primary structure comprises 197 residues: uncharacterized protein (197 aa).

A disordered region spans residues 1 to 31 (MMHFRKKSSISNTSDHDGANRASDVKISEDD). Phosphoserine occurs at positions 11 and 23. Residues 14–31 (SDHDGANRASDVKISEDD) are compositionally biased toward basic and acidic residues. Residues K26 and K32 each participate in a glycyl lysine isopeptide (Lys-Gly) (interchain with G-Cter in ubiquitin) cross-link. The segment at 157-197 (VGGASSQMYGEQAVYQPQQHVQTEEKQKKKKKGLFGRMKKK) is disordered. Over residues 158 to 177 (GGASSQMYGEQAVYQPQQHV) the composition is skewed to polar residues. Basic residues predominate over residues 184–197 (KKKKKGLFGRMKKK).

To yeast YGR273c.

This is an uncharacterized protein from Saccharomyces cerevisiae (strain ATCC 204508 / S288c) (Baker's yeast).